Consider the following 258-residue polypeptide: Imidazole glycerol phosphate synthase subunit HisF (258 aa).

Catalysis depends on residues Asp11 and Asp130.

Belongs to the HisA/HisF family. In terms of assembly, heterodimer of HisH and HisF.

It localises to the cytoplasm. It carries out the reaction 5-[(5-phospho-1-deoxy-D-ribulos-1-ylimino)methylamino]-1-(5-phospho-beta-D-ribosyl)imidazole-4-carboxamide + L-glutamine = D-erythro-1-(imidazol-4-yl)glycerol 3-phosphate + 5-amino-1-(5-phospho-beta-D-ribosyl)imidazole-4-carboxamide + L-glutamate + H(+). The protein operates within amino-acid biosynthesis; L-histidine biosynthesis; L-histidine from 5-phospho-alpha-D-ribose 1-diphosphate: step 5/9. In terms of biological role, IGPS catalyzes the conversion of PRFAR and glutamine to IGP, AICAR and glutamate. The HisF subunit catalyzes the cyclization activity that produces IGP and AICAR from PRFAR using the ammonia provided by the HisH subunit. This is Imidazole glycerol phosphate synthase subunit HisF from Escherichia coli (strain ATCC 8739 / DSM 1576 / NBRC 3972 / NCIMB 8545 / WDCM 00012 / Crooks).